Reading from the N-terminus, the 500-residue chain is Tektin-like protein 1 (500 aa).

Residues 1–25 (MPVLLPSTDRDQDSRVGAPEWHQAA) are disordered. Phosphoserine is present on serine 14. A coiled-coil region spans residues 198-229 (MLVWEREELKSMKRKMEKDMERSEALLKALAS). The interval 265–286 (VDITRPPTPRTQGLKTPPPDPV) is disordered. Tyrosine 372 bears the Phosphotyrosine mark. The stretch at 422-448 (LTRHNLQMEKNLKELRTTHDNLAWSLN) forms a coiled coil.

In terms of assembly, microtubule inner protein component of sperm flagellar doublet microtubules.

The protein resides in the cytoplasm. The protein localises to the cytoskeleton. Its subcellular location is the flagellum axoneme. Functionally, microtubule inner protein (MIP) part of the dynein-decorated doublet microtubules (DMTs) in sperm flagellar axoneme, which is required for motile flagellum beating. Forms an extensive interaction network cross-linking the lumen of axonemal doublet microtubules. This chain is Tektin-like protein 1, found in Rattus norvegicus (Rat).